A 419-amino-acid chain; its full sequence is G-protein coupled receptor 151 (419 aa).

Topologically, residues methionine 1–alanine 41 are extracellular. Residues asparagine 10 and asparagine 15 are each glycosylated (N-linked (GlcNAc...) asparagine). The chain crosses the membrane as a helical span at residues leucine 42 to leucine 62. The Cytoplasmic segment spans residues histidine 63 to serine 71. Residues methionine 72 to alanine 92 form a helical membrane-spanning segment. At proline 93–tryptophan 116 the chain is on the extracellular side. Cysteine 111 and cysteine 187 are disulfide-bonded. A helical membrane pass occupies residues phenylalanine 117–phenylalanine 137. The Cytoplasmic portion of the chain corresponds to methionine 138–threonine 153. Residues isoleucine 154–phenylalanine 174 traverse the membrane as a helical segment. The Extracellular segment spans residues phenylalanine 175–methionine 201. A helical membrane pass occupies residues phenylalanine 202–phenylalanine 222. At tryptophan 223 to leucine 252 the chain is on the cytoplasmic side. Residues leucine 253 to valine 273 traverse the membrane as a helical segment. The Extracellular portion of the chain corresponds to tryptophan 274–glycine 286. Residues phenylalanine 287–leucine 307 traverse the membrane as a helical segment. Over valine 308–lysine 419 the chain is Cytoplasmic. The interval proline 330 to lysine 419 is disordered. Positions valine 332–glycine 341 are enriched in polar residues. Over residues glutamate 410–lysine 419 the composition is skewed to acidic residues.

The protein belongs to the G-protein coupled receptor 1 family. As to expression, high expression in the spinal cord.

It is found in the cell membrane. In terms of biological role, proton-sensing G-protein coupled receptor. The sequence is that of G-protein coupled receptor 151 (GPR151) from Homo sapiens (Human).